A 926-amino-acid polypeptide reads, in one-letter code: Eukaryotic translation initiation factor 3 subunit C (926 aa).

3 disordered regions span residues 1-27, 157-251, and 266-300; these read MSRF…PKAA, ASYK…NDGT, and EKAS…EEGG. The span at 200–210 shows a compositional bias: basic and acidic residues; that stretch reads KPQEEEKKAPE. Positions 220-235 are enriched in acidic residues; sequence DEESESDDDEDSEDWA. Over residues 274–283 the composition is skewed to basic residues; the sequence is DDRRRRHKKK. Residues 287–299 show a composition bias toward acidic residues; that stretch reads EEEAEEEGEAEEG. Positions 672 to 848 constitute a PCI domain; that stretch reads FHMHINLELL…QTVVMHRTEP (177 aa). The span at 890–919 shows a compositional bias: low complexity; sequence GGYQQKQGYQRGDQKGGYQQKQNYQRGGYR. The interval 890–926 is disordered; that stretch reads GGYQQKQGYQRGDQKGGYQQKQNYQRGGYRNQNQSSY.

Belongs to the eIF-3 subunit C family. As to quaternary structure, component of the eukaryotic translation initiation factor 3 (eIF-3) complex, which is composed of 13 subunits: eif3a, eif3b, eif3c, eif3d, eif3e, eif3f, eif3g, eif3h, eif3i, eif3j, eif3k, eif3l and eif3m.

It localises to the cytoplasm. Functionally, component of the eukaryotic translation initiation factor 3 (eIF-3) complex, which is involved in protein synthesis of a specialized repertoire of mRNAs and, together with other initiation factors, stimulates binding of mRNA and methionyl-tRNAi to the 40S ribosome. The eIF-3 complex specifically targets and initiates translation of a subset of mRNAs involved in cell proliferation. The polypeptide is Eukaryotic translation initiation factor 3 subunit C (eif3c) (Danio rerio (Zebrafish)).